Consider the following 213-residue polypeptide: Orotate phosphoribosyltransferase (213 aa).

Lysine 26 contributes to the 5-phospho-alpha-D-ribose 1-diphosphate binding site. 34–35 (FF) serves as a coordination point for orotate. Residues 72–73 (YK), arginine 99, lysine 100, lysine 103, histidine 105, and 124–132 (DDVITAGTA) each bind 5-phospho-alpha-D-ribose 1-diphosphate. Orotate contacts are provided by threonine 128 and arginine 156.

The protein belongs to the purine/pyrimidine phosphoribosyltransferase family. PyrE subfamily. In terms of assembly, homodimer. Mg(2+) is required as a cofactor.

It carries out the reaction orotidine 5'-phosphate + diphosphate = orotate + 5-phospho-alpha-D-ribose 1-diphosphate. Its pathway is pyrimidine metabolism; UMP biosynthesis via de novo pathway; UMP from orotate: step 1/2. Functionally, catalyzes the transfer of a ribosyl phosphate group from 5-phosphoribose 1-diphosphate to orotate, leading to the formation of orotidine monophosphate (OMP). This is Orotate phosphoribosyltransferase from Pseudomonas putida (strain GB-1).